The chain runs to 215 residues: Hibernation-associated plasma protein HP-27 (215 aa).

A signal peptide spans 1 to 30 (MYEAGKRASFMGGAGIWILALSVLMHVVCS). The interval 34 to 79 (GNPESCNVPGPQGPPGMRGPPGTPGKPGPPGWNGFPGLPGPPGPPG) is disordered. In terms of domain architecture, Collagen-like spans 43–81 (GPQGPPGMRGPPGTPGKPGPPGWNGFPGLPGPPGPPGMT). Residues 44–63 (PQGPPGMRGPPGTPGKPGPP) show a composition bias toward pro residues. One can recognise a C1q domain in the interval 85-215 (HSKGTSAFAV…VFSGFLIHEN (131 aa)). A glycan (N-linked (GlcNAc...) asparagine) is linked at Asn155.

As to expression, plasma; synthesized in the liver.

It is found in the secreted. Plasma proteins HP-20, HP-25, HP-27 and HP-55 form a 140 kDa complex via disulfide bonds in the plasma and are hibernation specific. The polypeptide is Hibernation-associated plasma protein HP-27 (Tamias sibiricus (Siberian chipmunk)).